We begin with the raw amino-acid sequence, 190 residues long: FMRFamide-related peptides (190 aa).

The signal sequence occupies residues 1-21 (MSCSRTVALLAALWLVVGATS). Positions 22–33 (SPVRRSPDLEAR) are excised as a propeptide. Residue Phe-45 is modified to Phenylalanine amide. The propeptide occupies 69 to 104 (GNSFLRFGRSQPLTLSTDDLVSLLRAYEEDYDTPMT). Phe-113 carries the post-translational modification Phenylalanine amide. The propeptide occupies 116–150 (DPNFIRLGRSADDDKSAFEQNSELVVSGYPQRKSR). Leucine amide is present on Leu-158. The propeptide occupies 160-190 (RDSEEVNENEFEETEESRRKRSADSCHDCQS). The segment at 161 to 190 (DSEEVNENEFEETEESRRKRSADSCHDCQS) is disordered. A compositionally biased stretch (acidic residues) spans 164–174 (EVNENEFEETE). The segment covering 175–190 (ESRRKRSADSCHDCQS) has biased composition (basic and acidic residues).

It belongs to the FARP (FMRFamide related peptide) family. RFamide 1: Expressed in corpora cardiaca (CC), corpora allata (CA), antennal lobe (AL) and gnathal ganglion (GNG) (at protein level). Expression in AL detected in most animals, in CC, CA and in GNG in some animals (at protein level). RFamide precursor-related peptide 2: Expressed in corpora cardiaca (CC), corpora allata (CA), antennal lobe (AL) and gnathal ganglion (GNG) (at protein level). Expression in AL detected in some animals, expression in CC, CA and GNG in few animals (at protein level). RFamide 3: Expressed in corpora cardiaca (CC), corpora allata (CA), antennal lobe (AL) and gnathal ganglion (GNG) (at protein level). Expression in AL detected in all animals, in CC, CA and GNG in most animals (at protein level). RFamide 5: Expressed in corpora cardiaca (CC), corpora allata (CA), antennal lobe (AL) and gnathal ganglion (GNG) (at protein level). Expression in AL detected in all animals, in CC, CA and in GNG in some animals (at protein level).

The protein localises to the secreted. In insects, FMRFamide and related peptides have modulatory actions at skeletal neuromuscular junctions, and peptides that are immunologically related to FMRFamide are released into the circulation from neurohemal organs. The protein is FMRFamide-related peptides of Agrotis ipsilon (Black cutworm moth).